The following is a 71-amino-acid chain: MTKFTFSRFVIFSLFFTFISVSTFGNINFRFIVCKWTIFSFVALFYIFTHTSFTSLCFFGLRLFWHFFPRM.

Transmembrane regions (helical) follow at residues Phe-9–Phe-29 and Phe-41–Leu-61.

The protein resides in the membrane. This is an uncharacterized protein from Acheta domesticus (House cricket).